Consider the following 349-residue polypeptide: Mitomycin biosynthesis 6-O-methyltransferase (349 aa).

S-adenosyl-L-methionine is bound by residues S167, G190, 213-214, 240-241, and K255; these read ER and DF. H259 acts as the Proton acceptor in catalysis. Position 288 (N288) interacts with substrate.

This sequence belongs to the class I-like SAM-binding methyltransferase superfamily. Cation-independent O-methyltransferase family. COMT subfamily. As to quaternary structure, homodimer.

It carries out the reaction 6-demethylmitomycin A + S-adenosyl-L-methionine = mitomycin A + S-adenosyl-L-homocysteine. It catalyses the reaction 6-demethylmitomycin B + S-adenosyl-L-methionine = mitomycin B + S-adenosyl-L-homocysteine. Its activity is regulated as follows. Completely inhibited by Zn(2+) and Cu(2+). In terms of biological role, involved in the biosynthesis of the quinone methoxy group present in the mitomycin A and B, which are used as anticancer agents. In vitro, catalyzes the 6-O-methylation of both C9-beta- and C9-alpha-configured 6-hydroxymitomycins via the transfer of the S-methyl group of S-adenosyl-L-methionine (AdoMet) to the 6-demethylmitomycin A and B. It can also use hydroxyquinone as substrate. The protein is Mitomycin biosynthesis 6-O-methyltransferase of Streptomyces lavendulae.